The chain runs to 507 residues: RNA-splicing ligase RtcB homolog (507 aa).

Mn(2+) contacts are provided by D121, C124, H229, H261, and H355. 228–232 (NHYAE) serves as a coordination point for GMP. GMP is bound by residues 355 to 356 (HN), 404 to 407 (GGTM), S411, 430 to 433 (HGAG), and K506. H430 serves as the catalytic GMP-histidine intermediate.

This sequence belongs to the RtcB family. In terms of assembly, catalytic component of the tRNA-splicing ligase complex. Requires Mn(2+) as cofactor.

The catalysed reaction is a 3'-end 3'-phospho-ribonucleotide-RNA + a 5'-end dephospho-ribonucleoside-RNA + GTP = a ribonucleotidyl-ribonucleotide-RNA + GMP + diphosphate. The enzyme catalyses a 3'-end 2',3'-cyclophospho-ribonucleotide-RNA + a 5'-end dephospho-ribonucleoside-RNA + GTP + H2O = a ribonucleotidyl-ribonucleotide-RNA + GMP + diphosphate + H(+). Catalytic subunit of the tRNA-splicing ligase complex that acts by directly joining spliced tRNA halves to mature-sized tRNAs by incorporating the precursor-derived splice junction phosphate into the mature tRNA as a canonical 3',5'-phosphodiester. May act as an RNA ligase with broad substrate specificity, and may function toward other RNAs. The protein is RNA-splicing ligase RtcB homolog of Branchiostoma floridae (Florida lancelet).